Here is a 226-residue protein sequence, read N- to C-terminus: NEDD8-specific protease 1 (226 aa).

The protein belongs to the peptidase C48 family.

Its function is as follows. Processes the pre-form of the ubiquitin-like protein NEDD8/RUB1. Has the capacity to discriminate between NEDD8/RUB1 and ubiquitin. Has no SUMO protease activity. This chain is NEDD8-specific protease 1 (NEDP1), found in Arabidopsis thaliana (Mouse-ear cress).